The following is a 158-amino-acid chain: MLMPKQNRVAIYEYLFKEGVMVAKKDYHAPKHPDLEKIPNLQVIKAMQSLKSRGYVKEQFAWRHFYWYLTNEGIEYLRIFLHLPPEIVPATLKRSVRAETVRRGAVGRPDAPARSAEDRSAYRRAPTTPAAHDKKADVGPGSADLEFRGGFGRGRPAP.

A disordered region spans residues 99 to 158 (ETVRRGAVGRPDAPARSAEDRSAYRRAPTTPAAHDKKADVGPGSADLEFRGGFGRGRPAP). Positions 149–158 (GGFGRGRPAP) are enriched in gly residues.

Belongs to the eukaryotic ribosomal protein eS10 family.

The protein localises to the cytoplasm. This chain is Small ribosomal subunit protein eS10 (RpS10), found in Spodoptera frugiperda (Fall armyworm).